A 159-amino-acid chain; its full sequence is Bacterioferritin (159 aa).

In terms of domain architecture, Ferritin-like diiron spans 1–145 (MQGDPEVLRL…TQLELMDKLG (145 aa)). Positions 18 and 51 each coordinate Fe cation. M52 is a binding site for heme b. Fe cation contacts are provided by H54, E94, E127, and H130.

This sequence belongs to the bacterioferritin family. As to quaternary structure, homooligomer of 24 subunits, arranged as 12 dimers, that are packed together to form an approximately spherical molecule with a central cavity, in which large amounts of iron can be deposited. Heme b serves as cofactor.

It catalyses the reaction 4 Fe(2+) + O2 + 4 H(+) = 4 Fe(3+) + 2 H2O. It carries out the reaction Fe(2+)(in) = Fe(2+)(out). Its function is as follows. Iron-storage protein, whose ferroxidase center binds Fe(2+), oxidizes it using dioxygen to Fe(3+), and participates in the subsequent Fe(3+) oxide mineral core formation within the central cavity of the BFR protein shell. The protein is Bacterioferritin (bfr) of Mycolicibacterium paratuberculosis (strain ATCC BAA-968 / K-10) (Mycobacterium paratuberculosis).